The sequence spans 107 residues: Phosphoribosyl-ATP pyrophosphatase (107 aa).

Belongs to the PRA-PH family.

The protein localises to the cytoplasm. It carries out the reaction 1-(5-phospho-beta-D-ribosyl)-ATP + H2O = 1-(5-phospho-beta-D-ribosyl)-5'-AMP + diphosphate + H(+). It functions in the pathway amino-acid biosynthesis; L-histidine biosynthesis; L-histidine from 5-phospho-alpha-D-ribose 1-diphosphate: step 2/9. This chain is Phosphoribosyl-ATP pyrophosphatase (hisE), found in Neisseria meningitidis serogroup A / serotype 4A (strain DSM 15465 / Z2491).